The following is a 478-amino-acid chain: Ribosomal RNA small subunit methyltransferase F (478 aa).

S-adenosyl-L-methionine is bound by residues 123–129, E147, D174, and D192; that span reads AAAPGSK. The active-site Nucleophile is the C245.

This sequence belongs to the class I-like SAM-binding methyltransferase superfamily. RsmB/NOP family.

It localises to the cytoplasm. The enzyme catalyses cytidine(1407) in 16S rRNA + S-adenosyl-L-methionine = 5-methylcytidine(1407) in 16S rRNA + S-adenosyl-L-homocysteine + H(+). In terms of biological role, specifically methylates the cytosine at position 1407 (m5C1407) of 16S rRNA. This is Ribosomal RNA small subunit methyltransferase F from Vibrio campbellii (strain ATCC BAA-1116).